An 88-amino-acid polypeptide reads, in one-letter code: Large ribosomal subunit protein bL27 (88 aa).

The tract at residues 1-24 (MAHKKGTGSTRNGRDSNSKRLGVK) is disordered.

It belongs to the bacterial ribosomal protein bL27 family.

This Prochlorococcus marinus (strain MIT 9313) protein is Large ribosomal subunit protein bL27.